We begin with the raw amino-acid sequence, 285 residues long: Shikimate dehydrogenase (NADP(+)) (285 aa).

Shikimate contacts are provided by residues 22–24 and Thr-71; that span reads SRS. Lys-75 acts as the Proton acceptor in catalysis. Shikimate contacts are provided by Asn-96 and Asp-111. NADP(+) contacts are provided by residues 136-140, 160-165, and Ile-225; these read GAGGA and NRTVGR. Shikimate is bound at residue Tyr-227. An NADP(+)-binding site is contributed by Gly-248.

It belongs to the shikimate dehydrogenase family. In terms of assembly, homodimer.

The enzyme catalyses shikimate + NADP(+) = 3-dehydroshikimate + NADPH + H(+). It functions in the pathway metabolic intermediate biosynthesis; chorismate biosynthesis; chorismate from D-erythrose 4-phosphate and phosphoenolpyruvate: step 4/7. In terms of biological role, involved in the biosynthesis of the chorismate, which leads to the biosynthesis of aromatic amino acids. Catalyzes the reversible NADPH linked reduction of 3-dehydroshikimate (DHSA) to yield shikimate (SA). This is Shikimate dehydrogenase (NADP(+)) from Rhizobium etli (strain CIAT 652).